We begin with the raw amino-acid sequence, 98 residues long: NADH-ubiquinone oxidoreductase chain 4L (98 aa).

3 consecutive transmembrane segments (helical) span residues 1–21, 26–46, and 59–79; these read MTPIQFTFSSAFLLGLSGLAF, LLSALLCLEGMMLSLFIALSL, and APMLLLAFSACEASVGLALMV.

This sequence belongs to the complex I subunit 4L family.

It localises to the mitochondrion membrane. It carries out the reaction a ubiquinone + NADH + 5 H(+)(in) = a ubiquinol + NAD(+) + 4 H(+)(out). Core subunit of the mitochondrial membrane respiratory chain NADH dehydrogenase (Complex I) which catalyzes electron transfer from NADH through the respiratory chain, using ubiquinone as an electron acceptor. Part of the enzyme membrane arm which is embedded in the lipid bilayer and involved in proton translocation. The sequence is that of NADH-ubiquinone oxidoreductase chain 4L (MT-ND4L) from Tetraodon nigroviridis (Spotted green pufferfish).